Reading from the N-terminus, the 733-residue chain is FYVE, RhoGEF and PH domain-containing protein 3 (733 aa).

3 stretches are compositionally biased toward polar residues: residues 1-11 (MELGRSSSTPQ), 47-60 (HSSS…STRE), and 106-117 (ETASDSRVPQDN). The disordered stretch occupies residues 1–134 (MELGRSSSTP…GVGEEPDPKV (134 aa)). The span at 118–129 (PQEEEDSGVGEE) shows a compositional bias: acidic residues. S124 is modified (phosphoserine). In terms of domain architecture, DH spans 153–337 (KLLHIAQELL…STAADHSNAA (185 aa)). The PH 1 domain occupies 366 to 465 (ELIKEGSIQK…WIQVIQATVE (100 aa)). The disordered stretch occupies residues 481–535 (CSQDEEPTLSPDQPVMSTSSVEPAGVADSNGGTPGIESRKSSSKTRRDKEKPGCK). The segment covering 517–533 (ESRKSSSKTRRDKEKPG) has biased composition (basic and acidic residues). The segment at 528 to 584 (DKEKPGCKSCGETFNSITKRRYRCKLCGEVICRKCSEFKAENSKQSRVCRECFLEEP) adopts an FYVE-type zinc-finger fold. The Zn(2+) site is built by C534, C537, C551, C554, C559, C562, C576, and C579. Disordered stretches follow at residues 586 to 612 (VPPS…DPRP) and 712 to 733 (GDTA…TDTP). A PH 2 domain is found at 612-711 (PSLLCGTLNL…WLKALGTAVH (100 aa)). Phosphothreonine is present on T732.

As to expression, detected in adult brain, spleen, lung and skeletal muscle. Detected in embryos from 7 dpc to 17 dpc.

The protein localises to the cytoplasm. It localises to the cytoskeleton. Its function is as follows. Promotes the formation of filopodia. May activate CDC42, a member of the Ras-like family of Rho- and Rac proteins, by exchanging bound GDP for free GTP. Plays a role in regulating the actin cytoskeleton and cell shape. In Mus musculus (Mouse), this protein is FYVE, RhoGEF and PH domain-containing protein 3 (Fgd3).